Consider the following 294-residue polypeptide: Phosphoribosylaminoimidazole-succinocarboxamide synthase (294 aa).

This sequence belongs to the SAICAR synthetase family.

It carries out the reaction 5-amino-1-(5-phospho-D-ribosyl)imidazole-4-carboxylate + L-aspartate + ATP = (2S)-2-[5-amino-1-(5-phospho-beta-D-ribosyl)imidazole-4-carboxamido]succinate + ADP + phosphate + 2 H(+). The protein operates within purine metabolism; IMP biosynthesis via de novo pathway; 5-amino-1-(5-phospho-D-ribosyl)imidazole-4-carboxamide from 5-amino-1-(5-phospho-D-ribosyl)imidazole-4-carboxylate: step 1/2. This Thermoplasma volcanium (strain ATCC 51530 / DSM 4299 / JCM 9571 / NBRC 15438 / GSS1) protein is Phosphoribosylaminoimidazole-succinocarboxamide synthase.